Here is a 940-residue protein sequence, read N- to C-terminus: Protein translocase subunit SecA (940 aa).

Residues glutamine 87, 105-109 (GEGKT), and aspartate 494 each bind ATP. The disordered stretch occupies residues 879-940 (AQQQKKAVEG…KCHGASEASV (62 aa)). Residues 884 to 898 (KAVEGRATADGKLDE) show a composition bias toward basic and acidic residues. Positions 900–915 (SVAAAARPAAASRPAV) are enriched in low complexity. Zn(2+) contacts are provided by cysteine 921, cysteine 923, cysteine 932, and histidine 933.

This sequence belongs to the SecA family. Monomer and homodimer. Part of the essential Sec protein translocation apparatus which comprises SecA, SecYEG and auxiliary proteins SecDF-YajC and YidC. Requires Zn(2+) as cofactor.

It localises to the cell inner membrane. Its subcellular location is the cytoplasm. It catalyses the reaction ATP + H2O + cellular proteinSide 1 = ADP + phosphate + cellular proteinSide 2.. Functionally, part of the Sec protein translocase complex. Interacts with the SecYEG preprotein conducting channel. Has a central role in coupling the hydrolysis of ATP to the transfer of proteins into and across the cell membrane, serving as an ATP-driven molecular motor driving the stepwise translocation of polypeptide chains across the membrane. The protein is Protein translocase subunit SecA of Myxococcus xanthus (strain DK1622).